A 447-amino-acid chain; its full sequence is uncharacterized protein (447 aa).

The tract at residues 392–435 (RFTKPSSSVAKSTSPSLRNSGSDESDLNQSDSDKEDERVVPVPK) is disordered. Positions 395 to 407 (KPSSSVAKSTSPS) are enriched in low complexity. Over residues 408 to 421 (LRNSGSDESDLNQS) the composition is skewed to polar residues.

This is an uncharacterized protein from Invertebrate iridescent virus 3 (IIV-3).